A 264-amino-acid chain; its full sequence is tRNA pseudouridine synthase A (264 aa).

The Nucleophile role is filled by Asp51. Position 109 (Tyr109) interacts with substrate.

Belongs to the tRNA pseudouridine synthase TruA family. Homodimer.

The catalysed reaction is uridine(38/39/40) in tRNA = pseudouridine(38/39/40) in tRNA. Functionally, formation of pseudouridine at positions 38, 39 and 40 in the anticodon stem and loop of transfer RNAs. The chain is tRNA pseudouridine synthase A from Vibrio cholerae serotype O1 (strain ATCC 39541 / Classical Ogawa 395 / O395).